The chain runs to 146 residues: Hemoglobin subunit beta (146 aa).

Residues 2–146 (HWTAEEKQLI…VAHALARKYH (145 aa)) enclose the Globin domain. His-63 and His-92 together coordinate heme b.

This sequence belongs to the globin family. Heterotetramer of two alpha chains and two beta chains. Red blood cells.

In terms of biological role, involved in oxygen transport from the lung to the various peripheral tissues. This chain is Hemoglobin subunit beta (HBB), found in Aquila chrysaetos (Golden eagle).